A 352-amino-acid chain; its full sequence is tRNA N6-adenosine threonylcarbamoyltransferase (352 aa).

H115 and H119 together coordinate Fe cation. Residues 138 to 142 (LVSGG), D171, G184, and N277 each bind substrate. D305 is a binding site for Fe cation.

The protein belongs to the KAE1 / TsaD family. Fe(2+) serves as cofactor.

Its subcellular location is the cytoplasm. The catalysed reaction is L-threonylcarbamoyladenylate + adenosine(37) in tRNA = N(6)-L-threonylcarbamoyladenosine(37) in tRNA + AMP + H(+). Required for the formation of a threonylcarbamoyl group on adenosine at position 37 (t(6)A37) in tRNAs that read codons beginning with adenine. Is involved in the transfer of the threonylcarbamoyl moiety of threonylcarbamoyl-AMP (TC-AMP) to the N6 group of A37, together with TsaE and TsaB. TsaD likely plays a direct catalytic role in this reaction. The polypeptide is tRNA N6-adenosine threonylcarbamoyltransferase (Variovorax paradoxus (strain S110)).